Consider the following 280-residue polypeptide: Putative sugar uptake protein (280 aa).

The next 10 helical transmembrane spans lie at 4-21 (LIAL…LIAG), 33-52 (MGLG…IHPA), 56-78 (ITIF…GQFI), 91-113 (LSTG…EWTS), 117-136 (YLIG…LTAI), 149-166 (IILL…SSFP), 176-195 (LFLP…LLVS), 207-229 (WLNI…SAQL), 233-255 (ITAF…FFIG), and 262-279 (ELIA…GAAI).

This sequence belongs to the GRP transporter (TC 2.A.7.5) family.

It localises to the cell membrane. The chain is Putative sugar uptake protein from Lactobacillus helveticus (Lactobacillus suntoryeus).